Reading from the N-terminus, the 304-residue chain is Germ cell-specific gene 1-like protein (304 aa).

Topologically, residues 1-8 (MKTTRKCR) are cytoplasmic. Residues 9-29 (ALLSVGLNLLALLFSTTAFIT) form a helical membrane-spanning segment. The Extracellular portion of the chain corresponds to 30–112 (TYWCEGTQRV…FIDLAPASER (83 aa)). A helical transmembrane segment spans residues 113–133 (GVLWLSVVSEVLYIMLLVVGF). The Cytoplasmic segment spans residues 134 to 153 (SLMCLELFHSSNVIDGLKLN). The chain crosses the membrane as a helical span at residues 154–174 (AFAAVFTVLSGLLGMVAHMMY). Over 175–197 (TQVFQITVSLGPEDWRPHTWDYG) the chain is Extracellular. The chain crosses the membrane as a helical span at residues 198–218 (WSFCMAWGSFTCCMAASVTTL). Topologically, residues 219-304 (NSYTKTVIEF…NTESLGEEQC (86 aa)) are cytoplasmic. The span at 266-278 (VDVYPSHGSSHGN) shows a compositional bias: polar residues. The segment at 266–304 (VDVYPSHGSSHGNSRGKMRSPPAPVDQGDNTESLGEEQC) is disordered.

It belongs to the GSG1 family. Component of the AMPAR complex.

It localises to the cell membrane. The protein localises to the synapse. Functionally, as a component of the AMPAR complex, modifies AMPA receptor (AMPAR) gating. The polypeptide is Germ cell-specific gene 1-like protein (gsg1l) (Danio rerio (Zebrafish)).